The sequence spans 1828 residues: Separin (1828 aa).

Residues 1647 to 1741 (KEAGSYILNP…SGALYECGSF (95 aa)) enclose the Peptidase C50 domain. Residue C1730 is part of the active site.

As to quaternary structure, interacts with cut2. Interacts with rad21.

The protein resides in the cytoplasm. The protein localises to the nucleus. The enzyme catalyses All bonds known to be hydrolyzed by this endopeptidase have arginine in P1 and an acidic residue in P4. P6 is often occupied by an acidic residue or by a hydroxy-amino-acid residue, the phosphorylation of which enhances cleavage.. Its activity is regulated as follows. It is inactivated via its interaction with cut2, which probably covers its active site. Cut2 degradation at anaphase, liberates it and triggers rad21 cleavage. In terms of biological role, caspase-like protease, which plays a central role in the chromosome segregation by cleaving the rad21 subunit of the cohesin complex at the onset of anaphase. During most of the cell cycle, it is inactivated by securin/cut2 protein. It is also required for pointed nuclear formation. In Schizosaccharomyces pombe (strain 972 / ATCC 24843) (Fission yeast), this protein is Separin (cut1).